A 505-amino-acid chain; its full sequence is Methylmalonyl-CoA carboxyltransferase 5S subunit (505 aa).

In terms of domain architecture, Pyruvate carboxyltransferase spans 14-276 (VGITELVLRD…TTNLDYDRLH (263 aa)). Substrate is bound by residues 22–26 (RDAHQ), alanine 59, and lysine 184. Aspartate 23 is a binding site for Co(2+). Residues lysine 184, histidine 215, and histidine 217 each contribute to the Co(2+) site. Lysine 184 bears the N6-carboxylysine; partial mark.

Homodimer. Transcarboxylase is composed of three subunits: 1.3S, 5S, and 12S. The core of the enzyme is composed of six 12S subunits. On each side of the core there are three pairs of 5S subunits. Each 5S dimer is attached to the core by two 1.3S subunits. Thus the total number of chains is 30 (6 + 12 + 12). Co(2+) is required as a cofactor. Lys-184 is carboxylated in the free enzyme and helps to coordinate the cobalt ion. Lys-184 is partially carboxylated in the complex with pyruvate, but is not carboxylated in the oxaloacetate-bound form.

It catalyses the reaction (S)-methylmalonyl-CoA + pyruvate = propanoyl-CoA + oxaloacetate. Functionally, the 5S subunit specifically catalyzes the transfer of the carboxyl group from biotin of the 1.3S subunit to pyruvate to form oxaloacetate and 1.3S biotin. This chain is Methylmalonyl-CoA carboxyltransferase 5S subunit, found in Propionibacterium freudenreichii subsp. shermanii.